The sequence spans 281 residues: Nucleotide-binding protein TRQ2_1124 (281 aa).

9–16 contacts ATP; sequence GLSGAGKT. Position 58 to 61 (58 to 61) interacts with GTP; it reads DVRS.

Belongs to the RapZ-like family.

Functionally, displays ATPase and GTPase activities. This is Nucleotide-binding protein TRQ2_1124 from Thermotoga sp. (strain RQ2).